The sequence spans 221 residues: Octanoyltransferase (221 aa).

The BPL/LPL catalytic domain occupies 31 to 213; it reads DKSADEIWLV…HFVTILGYNK (183 aa). Substrate-binding positions include 70–77, 142–144, and 155–157; these read RGGQITYH, SLG, and GLA. The Acyl-thioester intermediate role is filled by Cys-173.

Belongs to the LipB family.

Its subcellular location is the cytoplasm. It catalyses the reaction octanoyl-[ACP] + L-lysyl-[protein] = N(6)-octanoyl-L-lysyl-[protein] + holo-[ACP] + H(+). The protein operates within protein modification; protein lipoylation via endogenous pathway; protein N(6)-(lipoyl)lysine from octanoyl-[acyl-carrier-protein]: step 1/2. Catalyzes the transfer of endogenously produced octanoic acid from octanoyl-acyl-carrier-protein onto the lipoyl domains of lipoate-dependent enzymes. Lipoyl-ACP can also act as a substrate although octanoyl-ACP is likely to be the physiological substrate. The chain is Octanoyltransferase from Mannheimia succiniciproducens (strain KCTC 0769BP / MBEL55E).